The primary structure comprises 266 residues: Undecaprenyl-diphosphatase (266 aa).

8 helical membrane passes run 1–21, 39–59, 87–107, 111–131, 150–172, 187–207, 218–238, and 244–264; these read MTLT…FLPI, QGLA…MIYF, WWVI…KAFI, ARSA…LWYA, LIVG…ITMT, FSFL…TLDL, ALIV…YLFL, and IGML…LLFV.

This sequence belongs to the UppP family.

Its subcellular location is the cell inner membrane. The catalysed reaction is di-trans,octa-cis-undecaprenyl diphosphate + H2O = di-trans,octa-cis-undecaprenyl phosphate + phosphate + H(+). Functionally, catalyzes the dephosphorylation of undecaprenyl diphosphate (UPP). Confers resistance to bacitracin. In Pseudoalteromonas atlantica (strain T6c / ATCC BAA-1087), this protein is Undecaprenyl-diphosphatase.